Consider the following 122-residue polypeptide: ATP-dependent Clp protease adapter protein ClpS (122 aa).

The tract at residues methionine 1–serine 27 is disordered. Positions serine 10–alanine 19 are enriched in pro residues.

It belongs to the ClpS family. Binds to the N-terminal domain of the chaperone ClpA.

Involved in the modulation of the specificity of the ClpAP-mediated ATP-dependent protein degradation. This Paracidovorax citrulli (strain AAC00-1) (Acidovorax citrulli) protein is ATP-dependent Clp protease adapter protein ClpS.